The sequence spans 346 residues: Large ribosomal subunit protein uL1c (346 aa).

A chloroplast-targeting transit peptide spans 1 to 70 (MAACATHSSL…RASNHKFIVS (70 aa)). At tyrosine 129 the chain carries Phosphotyrosine. Threonine 177 is modified (phosphothreonine). The residue at position 197 (serine 197) is a Phosphoserine.

Belongs to the universal ribosomal protein uL1 family. Part of the 50S ribosomal subunit.

The protein resides in the plastid. Its subcellular location is the chloroplast. Functionally, this protein binds directly to 23S ribosomal RNA. This is Large ribosomal subunit protein uL1c (RPL1) from Arabidopsis thaliana (Mouse-ear cress).